The following is a 373-amino-acid chain: Glutamate 5-kinase (373 aa).

Residue K15 coordinates ATP. Residues S55, D142, and N154 each coordinate substrate. 174–175 provides a ligand contact to ATP; the sequence is TD. A PUA domain is found at 281 to 359; it reads RGSVVLDDGA…SQIEAVLGYV (79 aa).

This sequence belongs to the glutamate 5-kinase family.

The protein localises to the cytoplasm. The enzyme catalyses L-glutamate + ATP = L-glutamyl 5-phosphate + ADP. It participates in amino-acid biosynthesis; L-proline biosynthesis; L-glutamate 5-semialdehyde from L-glutamate: step 1/2. Its function is as follows. Catalyzes the transfer of a phosphate group to glutamate to form L-glutamate 5-phosphate. In Nitrosomonas eutropha (strain DSM 101675 / C91 / Nm57), this protein is Glutamate 5-kinase.